The primary structure comprises 483 residues: Glutamate--tRNA ligase (483 aa).

A 'HIGH' region motif is present at residues 9–19; it reads PSPTGFLHIGN. The 'KMSKS' region motif lies at 253-257; sequence KLSKR. Lys-256 is a binding site for ATP.

The protein belongs to the class-I aminoacyl-tRNA synthetase family. Glutamate--tRNA ligase type 1 subfamily. As to quaternary structure, monomer.

It localises to the cytoplasm. The enzyme catalyses tRNA(Glu) + L-glutamate + ATP = L-glutamyl-tRNA(Glu) + AMP + diphosphate. Catalyzes the attachment of glutamate to tRNA(Glu) in a two-step reaction: glutamate is first activated by ATP to form Glu-AMP and then transferred to the acceptor end of tRNA(Glu). This is Glutamate--tRNA ligase from Mycoplasma mycoides subsp. mycoides SC (strain CCUG 32753 / NCTC 10114 / PG1).